A 439-amino-acid polypeptide reads, in one-letter code: Xylose isomerase (439 aa).

Active-site residues include His-98 and Asp-101. Mg(2+) is bound by residues Glu-229, Glu-265, His-268, Asp-293, Asp-304, Asp-306, and Asp-335.

This sequence belongs to the xylose isomerase family. Homotetramer. Mg(2+) is required as a cofactor.

The protein localises to the cytoplasm. It catalyses the reaction alpha-D-xylose = alpha-D-xylulofuranose. In terms of biological role, involved in D-xylose catabolism. This chain is Xylose isomerase (xylA), found in Staphylococcus xylosus.